A 175-amino-acid chain; its full sequence is NADH-quinone oxidoreductase subunit I (175 aa).

4Fe-4S ferredoxin-type domains are found at residues 69 to 98 and 115 to 144; these read KRDEQGRERCTACFCCMWICPANAIHIEAA and KKFEINLLRCIFCGLCEEACPKGAIYLDGT. The [4Fe-4S] cluster site is built by Cys78, Cys81, Cys84, Cys88, Cys124, Cys127, Cys130, and Cys134.

Belongs to the complex I 23 kDa subunit family. NDH-1 is composed of 14 different subunits. Subunits NuoA, H, J, K, L, M, N constitute the membrane sector of the complex. The cofactor is [4Fe-4S] cluster.

The protein localises to the cell inner membrane. It catalyses the reaction a quinone + NADH + 5 H(+)(in) = a quinol + NAD(+) + 4 H(+)(out). Functionally, NDH-1 shuttles electrons from NADH, via FMN and iron-sulfur (Fe-S) centers, to quinones in the respiratory chain. The immediate electron acceptor for the enzyme in this species is believed to be ubiquinone. Couples the redox reaction to proton translocation (for every two electrons transferred, four hydrogen ions are translocated across the cytoplasmic membrane), and thus conserves the redox energy in a proton gradient. In Leptospira biflexa serovar Patoc (strain Patoc 1 / Ames), this protein is NADH-quinone oxidoreductase subunit I.